The following is a 320-amino-acid chain: MIEIKNVSKYFSGNKVLKDVDLKIKGGEIFGIVGHSGAGKSTLLRCINGLETYDEGNVIVFGKDLKQINGKNLREFRKEVGMIFQNFNLLNRKDVYHNISLPLEVWGVPKNEIASRVKELLELVDLTDKIHSKPSNLSGGQKQRVAIARALALNPKILLCDEATSALDPNTTKSILNLLRTINSKLGITIVIVTHQMEVVKGICERVALIDAGVIKETGDVENLFLNPSSEMKKLIGQSDDDVLPKEGINIRVIFPKNSSEGALITSMARELNVDFSIVWGKLERFRDDVLGSLVINISEENKEVICNYLVSHNAIWEVA.

One can recognise an ABC transporter domain in the interval isoleucine 2 to glycine 237. Glycine 34–serine 41 is an ATP binding site.

The protein belongs to the ABC transporter superfamily. Methionine importer (TC 3.A.1.24) family. The complex is composed of two ATP-binding proteins (MetN), two transmembrane proteins (MetI) and a solute-binding protein (MetQ).

Its subcellular location is the cell membrane. The enzyme catalyses L-methionine(out) + ATP + H2O = L-methionine(in) + ADP + phosphate + H(+). It carries out the reaction D-methionine(out) + ATP + H2O = D-methionine(in) + ADP + phosphate + H(+). Functionally, part of the ABC transporter complex MetNIQ involved in methionine import. Responsible for energy coupling to the transport system. The protein is Methionine import ATP-binding protein MetN of Clostridium acetobutylicum (strain ATCC 824 / DSM 792 / JCM 1419 / IAM 19013 / LMG 5710 / NBRC 13948 / NRRL B-527 / VKM B-1787 / 2291 / W).